A 329-amino-acid chain; its full sequence is AUGMIN subunit 7 (329 aa).

Residues 169 to 197 (DVSELETKLSEQAKILSNLQQKVDDLAAK) adopt a coiled-coil conformation.

In terms of assembly, part of the augmin complex composed of 8 subunits. The complex acts on microtubules and interacts with gamma-tubulin in spindles and the phragmoplast.

It is found in the cytoplasm. Its subcellular location is the cytoskeleton. The protein resides in the spindle. The protein localises to the phragmoplast. Contributes to the assembly of the acentrosomal spindle and phragmoplast microtubule arrays as part of the augmin complex. Regulates the association of gamma-tubulin with the spindle and phragmoplast microtubules. The polypeptide is AUGMIN subunit 7 (Arabidopsis thaliana (Mouse-ear cress)).